The chain runs to 1186 residues: DNA excision repair protein ERCC-5 (1186 aa).

The N-domain stretch occupies residues 1 to 78; the sequence is MGVQGLWKLL…RIRPIFVFDG (78 aa). The residue at position 8 (lysine 8) is an N6-acetyllysine. Residue aspartate 30 participates in Mg(2+) binding. The segment at 31–67 is DNA-binding; may bind to the undamaged single-strand DNA of the DNA repair bubble; sequence ISIWLNQALKGVRDRHGNSIENPHLLTLFHRLCKLLF. Aspartate 77 contacts Mg(2+). Residues 79–785 form a spacer region region; that stretch reads DAPLLKKQTL…LRLFGIPYIQ (707 aa). Disordered regions lie at residues 306–342, 354–385, 404–473, 510–533, and 667–724; these read ESLP…PPSP, GSSS…SISP, CAGD…SVPK, HSDA…TNSV, and QAEF…AEDS. A compositionally biased stretch (basic and acidic residues) spans 325–336; the sequence is PCEKLKTEKEPD. Residue serine 384 is modified to Phosphoserine. Over residues 454 to 472 the composition is skewed to basic and acidic residues; that stretch reads AEEHVASTNEGREPTDSVP. Serine 705 is subject to Phosphoserine. Positions 786–881 are I-domain; sequence APMEAEAQCA…VTAMEILNEF (96 aa). 4 residues coordinate Mg(2+): glutamate 789, glutamate 791, aspartate 810, and aspartate 812. Residues 820–836 form a DNA-binding; may bind to the undamaged single-strand DNA of the DNA repair bubble region; it reads HVYRNFFNKNKFVEYYQ. The DNA-binding; H2TH (helix-2turn-helix) motif which binds double-stranded DNA stretch occupies residues 848–880; it reads RNKLINLAYLLGSDYTEGIPTVGCVTAMEILNE. Aspartate 861 contributes to the Mg(2+) binding site. Positions 912–918 are DNA-binding; may bind double-stranded DNA; sequence TKVKKKL. The interaction with PCNA stretch occupies residues 981 to 1009; sequence LKQLDAQQTQLRIDSFFRLAQQEKEDAKR. The tract at residues 1011-1186 is interaction with ERCC6/CSB; that stretch reads KSQRLNRAVT…RRARGRKRKT (176 aa). 2 disordered regions span residues 1056 to 1081 and 1095 to 1186; these read QKRG…SKGK and ESSD…KRKT. The Nuclear localization signal 1 motif lies at 1057–1074; it reads KRGITNTLEESSSLKRKR. Residues 1124–1133 are compositionally biased toward polar residues; sequence TSASDSQNSV. Positions 1169–1186 match the Nuclear localization signal 2 motif; the sequence is FGKKRRKLRRARGRKRKT. The span at 1169 to 1186 shows a compositional bias: basic residues; sequence FGKKRRKLRRARGRKRKT.

This sequence belongs to the XPG/RAD2 endonuclease family. XPG subfamily. As to quaternary structure, monomer. Homodimer. Component of the homologous recombination repair (HR) complex composed of ERCC5/XPG, BRCA2, PALB2, DSS1 and RAD51. Within the complex, interacts with BRCA2 and PALB2. Interacts with RNA polymerase II. Interacts (via C-terminus) with ERCC6/CSB; the interaction stimulates ERCC6/CSB binding to the DNA repair bubble and ERCC6/CSB ATPase activity. May form a complex composed of RNA polymerase II, ERCC6/CSB and ERCC5/XPG which associates with the DNA repair bubble during transcription-coupled nucleotide excision repair. Interacts with BRCA1; the interaction promotes the release of BRCA1 from DNA. Interacts with PCNA. Interacts with NTHL1; the interaction stimulates NTHL1 activity and NTHL1 binding to its DNA substrate. The cofactor is Mg(2+).

The protein localises to the nucleus. It localises to the chromosome. Single-stranded structure-specific DNA endonuclease involved in DNA excision repair. Makes the 3'incision in DNA nucleotide excision repair (NER). Binds and bends DNA repair bubble substrate and breaks base stacking at the single-strand/double-strand DNA junction of the DNA bubble. Plays a role in base excision repair (BER) by promoting the binding of DNA glycosylase NTHL1 to its substrate and increasing NTHL1 catalytic activity that removes oxidized pyrimidines from DNA. Involved in transcription-coupled nucleotide excision repair (TCR) which allows RNA polymerase II-blocking lesions to be rapidly removed from the transcribed strand of active genes. Functions during the initial step of TCR in cooperation with ERCC6/CSB to recognized stalled RNA polymerase II. Also, stimulates ERCC6/CSB binding to the DNA repair bubble and ERCC6/CSB ATPase activity. Required for DNA replication fork maintenance and preservation of genomic stability. Involved in homologous recombination repair (HRR) induced by DNA replication stress by recruiting RAD51, BRCA2, and PALB2 to the damaged DNA site. In TFIIH stimulates the 5'-3' helicase activity of XPD/ERCC2 and the DNA translocase activity of XPB/ERCC3. During HRR, binds to the replication fork with high specificity and stabilizes it. Also, acts upstream of HRR, to promote the release of BRCA1 from DNA. The chain is DNA excision repair protein ERCC-5 (ERCC5) from Homo sapiens (Human).